A 71-amino-acid polypeptide reads, in one-letter code: uncharacterized protein (71 aa).

The protein resides in the mitochondrion matrix. Its subcellular location is the kinetoplast. This is an uncharacterized protein from Trypanosoma brucei brucei.